The sequence spans 119 residues: Membrane-anchored ubiquitin-fold protein 6 (119 aa).

A Ubiquitin-like domain is found at 8 to 76 (IELKFRLADG…NNRTLAESRL (69 aa)). Cys114 is lipidated: S-palmitoyl cysteine. Position 116 is a cysteine methyl ester (Cys116). The S-geranylgeranyl cysteine moiety is linked to residue Cys116. A propeptide spans 117-119 (TIL) (removed in mature form).

Ubiquitous.

It is found in the cell membrane. Its function is as follows. May serve as docking site to facilitate the association of other proteins to the plasma membrane. The chain is Membrane-anchored ubiquitin-fold protein 6 (MUB6) from Arabidopsis thaliana (Mouse-ear cress).